Here is a 438-residue protein sequence, read N- to C-terminus: Dolichyl-diphosphooligosaccharide--protein glycosyltransferase 48 kDa subunit (438 aa).

The first 25 residues, 1 to 25 (MASLRLSVLLVSVSWLLLLVSGLRA), serve as a signal peptide directing secretion. Over 26 to 408 (GPRTLVLMEN…QYERFIPSAY (383 aa)) the chain is Lumenal. A helical transmembrane segment spans residues 409 to 429 (PYYASAFSVMFGLFIFSIVFL). Residues 430–438 (HMKEKEKSD) lie on the Cytoplasmic side of the membrane.

It belongs to the DDOST 48 kDa subunit family. As to quaternary structure, component of the oligosaccharyltransferase (OST) complex.

The protein resides in the endoplasmic reticulum membrane. It participates in protein modification; protein glycosylation. Its function is as follows. Subunit of the oligosaccharyl transferase (OST) complex that catalyzes the initial transfer of a defined glycan (Glc(3)Man(9)GlcNAc(2) in eukaryotes) from the lipid carrier dolichol-pyrophosphate to an asparagine residue within an Asn-X-Ser/Thr consensus motif in nascent polypeptide chains, the first step in protein N-glycosylation. N-glycosylation occurs cotranslationally and the complex associates with the Sec61 complex at the channel-forming translocon complex that mediates protein translocation across the endoplasmic reticulum (ER). All subunits are required for a maximal enzyme activity. Required for the assembly of both SST3A- and SS3B-containing OST complexes. In Xenopus laevis (African clawed frog), this protein is Dolichyl-diphosphooligosaccharide--protein glycosyltransferase 48 kDa subunit.